The primary structure comprises 116 residues: G antigen 2D (116 aa).

The tract at residues 1 to 116 is disordered; sequence MSWRGRSTYR…PEEGEKQSQC (116 aa). Composition is skewed to acidic residues over residues 31 to 44 and 86 to 95; these read FSDEVEPATPEEGE and ECEDGPDGQE. Basic and acidic residues predominate over residues 102 to 116; that stretch reads EEVKTPEEGEKQSQC.

This sequence belongs to the GAGE family. In terms of tissue distribution, not expressed in normal tissues, except in testis, but expressed by a large proportion of tumors of various histological origins.

The chain is G antigen 2D (GAGE2D) from Homo sapiens (Human).